Here is a 155-residue protein sequence, read N- to C-terminus: Large ribosomal subunit protein eL24A (155 aa).

Ser7 bears the Phosphoserine mark. The tract at residues 66–155 (EVAKKRSRKT…AFQKVAATSR (90 aa)) is disordered. A compositionally biased stretch (basic and acidic residues) spans 89-129 (LIKERRSLKPEVRKANREEKLKANKEKKKAEKAARKAEKAK). Over residues 131-142 (AGTQSSKFSKQQ) the composition is skewed to polar residues.

This sequence belongs to the eukaryotic ribosomal protein eL24 family. Component of the large ribosomal subunit (LSU). Mature yeast ribosomes consist of a small (40S) and a large (60S) subunit. The 40S small subunit contains 1 molecule of ribosomal RNA (18S rRNA) and 33 different proteins (encoded by 57 genes). The large 60S subunit contains 3 rRNA molecules (25S, 5.8S and 5S rRNA) and 46 different proteins (encoded by 81 genes).

Its subcellular location is the cytoplasm. Its function is as follows. Component of the ribosome, a large ribonucleoprotein complex responsible for the synthesis of proteins in the cell. The small ribosomal subunit (SSU) binds messenger RNAs (mRNAs) and translates the encoded message by selecting cognate aminoacyl-transfer RNA (tRNA) molecules. The large subunit (LSU) contains the ribosomal catalytic site termed the peptidyl transferase center (PTC), which catalyzes the formation of peptide bonds, thereby polymerizing the amino acids delivered by tRNAs into a polypeptide chain. The nascent polypeptides leave the ribosome through a tunnel in the LSU and interact with protein factors that function in enzymatic processing, targeting, and the membrane insertion of nascent chains at the exit of the ribosomal tunnel. The protein is Large ribosomal subunit protein eL24A of Saccharomyces cerevisiae (strain ATCC 204508 / S288c) (Baker's yeast).